The following is a 143-amino-acid chain: Peptide methionine sulfoxide reductase MsrB (143 aa).

The 123-residue stretch at 5 to 127 folds into the MsrB domain; it reads NEELKKKLTP…NSAALRFIPK (123 aa). Cysteine 116 acts as the Nucleophile in catalysis.

Belongs to the MsrB Met sulfoxide reductase family.

It catalyses the reaction L-methionyl-[protein] + [thioredoxin]-disulfide + H2O = L-methionyl-(R)-S-oxide-[protein] + [thioredoxin]-dithiol. This is Peptide methionine sulfoxide reductase MsrB from Halalkalibacterium halodurans (strain ATCC BAA-125 / DSM 18197 / FERM 7344 / JCM 9153 / C-125) (Bacillus halodurans).